The following is a 377-amino-acid chain: Lactosylceramide 1,3-N-acetyl-beta-D-glucosaminyltransferase A (377 aa).

Topologically, residues M1–Q12 are cytoplasmic. The helical; Signal-anchor for type II membrane protein transmembrane segment at F13–V30 threads the bilayer. At Q31–S377 the chain is on the lumenal side. 3 N-linked (GlcNAc...) asparagine glycosylation sites follow: N56, N167, and N275.

It belongs to the glycosyltransferase 31 family.

Its subcellular location is the golgi apparatus membrane. It carries out the reaction a beta-D-Gal-(1-&gt;4)-beta-D-Glc-(1&lt;-&gt;1)-Cer(d18:1(4E)) + UDP-N-acetyl-alpha-D-glucosamine = a beta-D-GlcNAc-(1-&gt;3)-beta-D-Gal-(1-&gt;4)-beta-D-Glc-(1&lt;-&gt;1)-Cer(d18:1(4E)) + UDP + H(+). The enzyme catalyses a neolactoside nLc4Cer(d18:1(4E)) + UDP-N-acetyl-alpha-D-glucosamine = a neolactoside IV(3)-beta-GlcNAc-nLc4Cer(d18:1(4E)) + UDP + H(+). It functions in the pathway protein modification; protein glycosylation. Its function is as follows. Beta-1,3-N-acetylglucosaminyltransferase that plays a key role in the synthesis of lacto- or neolacto-series carbohydrate chains on glycolipids. In Xenopus laevis (African clawed frog), this protein is Lactosylceramide 1,3-N-acetyl-beta-D-glucosaminyltransferase A (b3gnt5-a).